A 337-amino-acid polypeptide reads, in one-letter code: D-alanine--D-alanine ligase (337 aa).

Residues lysine 124–asparagine 330 form the ATP-grasp domain. Alanine 154–glutamate 209 provides a ligand contact to ATP. Positions 284, 297, and 299 each coordinate Mg(2+).

The protein belongs to the D-alanine--D-alanine ligase family. It depends on Mg(2+) as a cofactor. Requires Mn(2+) as cofactor.

The protein localises to the cytoplasm. It catalyses the reaction 2 D-alanine + ATP = D-alanyl-D-alanine + ADP + phosphate + H(+). It functions in the pathway cell wall biogenesis; peptidoglycan biosynthesis. Its function is as follows. Cell wall formation. The protein is D-alanine--D-alanine ligase of Shewanella putrefaciens (strain CN-32 / ATCC BAA-453).